Reading from the N-terminus, the 126-residue chain is Large ribosomal subunit protein uL22 (126 aa).

This sequence belongs to the universal ribosomal protein uL22 family. As to quaternary structure, part of the 50S ribosomal subunit.

In terms of biological role, this protein binds specifically to 23S rRNA; its binding is stimulated by other ribosomal proteins, e.g. L4, L17, and L20. It is important during the early stages of 50S assembly. It makes multiple contacts with different domains of the 23S rRNA in the assembled 50S subunit and ribosome. The globular domain of the protein is located near the polypeptide exit tunnel on the outside of the subunit, while an extended beta-hairpin is found that lines the wall of the exit tunnel in the center of the 70S ribosome. This is Large ribosomal subunit protein uL22 from Phenylobacterium zucineum (strain HLK1).